A 107-amino-acid polypeptide reads, in one-letter code: Nucleoid-associated protein RBE_0048 (107 aa).

The protein belongs to the YbaB/EbfC family. In terms of assembly, homodimer.

It is found in the cytoplasm. The protein localises to the nucleoid. Its function is as follows. Binds to DNA and alters its conformation. May be involved in regulation of gene expression, nucleoid organization and DNA protection. This Rickettsia bellii (strain RML369-C) protein is Nucleoid-associated protein RBE_0048.